A 1077-amino-acid polypeptide reads, in one-letter code: Ubiquitin-activating enzyme E1 2 (1077 aa).

Residues 16–36 are disordered; it reads SPMKKRRIDHTESADGSAINA. Residues alanine 499, aspartate 525, arginine 536, lysine 549, and 597–598 contribute to the ATP site; that span reads DN. Cysteine 653 (glycyl thioester intermediate) is an active-site residue.

It belongs to the ubiquitin-activating E1 family. Monomer. Expressed in leaves, flowers, roots and stems. Detected in germinating seeds, cotyledons, hypocotyls, vascular tissues, anthers, filaments, pollen, style, stigma, sepals, petals, ovary, developing ovules, funiculi and silique walls.

It carries out the reaction ATP + ubiquitin + [E1 ubiquitin-activating enzyme]-L-cysteine = AMP + diphosphate + S-ubiquitinyl-[E1 ubiquitin-activating enzyme]-L-cysteine.. It participates in protein modification; protein ubiquitination. Activates ubiquitin by first adenylating its C-terminal glycine residue with ATP, and thereafter linking this residue to the side chain of a cysteine residue in E1, yielding a ubiquitin-E1 thioester and free AMP. The polypeptide is Ubiquitin-activating enzyme E1 2 (UBA2) (Arabidopsis thaliana (Mouse-ear cress)).